A 469-amino-acid polypeptide reads, in one-letter code: Cysteine--tRNA ligase (469 aa).

Cys-29 contacts Zn(2+). The short motif at 31–41 (PTVYNYIHIGN) is the 'HIGH' region element. 3 residues coordinate Zn(2+): Cys-210, His-235, and Glu-239. The short motif at 267-271 (KMSKS) is the 'KMSKS' region element. An ATP-binding site is contributed by Lys-270.

The protein belongs to the class-I aminoacyl-tRNA synthetase family. Monomer. It depends on Zn(2+) as a cofactor.

The protein localises to the cytoplasm. The enzyme catalyses tRNA(Cys) + L-cysteine + ATP = L-cysteinyl-tRNA(Cys) + AMP + diphosphate. This chain is Cysteine--tRNA ligase, found in Thermosipho africanus (strain TCF52B).